The chain runs to 338 residues: Heat shock factor 2-binding protein (338 aa).

Positions 1–20 (MAATVGDGSGTEEACRNMES) are disordered. Positions 12 to 126 (EEACRNMESK…LLQQAEYCTQ (115 aa)) form a coiled coil. The interval 18-55 (MESKEEFVKVRKKDLERLTTEVMQIRDFLPRILNGELL) is interaction with BRME1. Positions 87–338 (ARLETAQADS…EDLRALDCNV (252 aa)) are interaction with BRCA2.

Interacts (via C-terminus) with BNC1. Associates with HSF2. The interaction seems to occur between the trimerization domain of HSF2 and the N-terminal hydrophilic region of HSF2BP. Interacts (via N-terminus) with BRME1. Interacts with BRCA2 and BRME1; the interactions are direct and allow the formation of a ternary complex. The complex BRME1:HSF2BP:BRCA2 interacts with SPATA22, MEIOB and RAD51. Post-translationally, sumoylated by UBE2I in response to MEKK1-mediated stimuli. In terms of tissue distribution, expressed in testis and, to a lesser extent, in lung and muscle.

The protein resides in the cytoplasm. The protein localises to the chromosome. Functionally, meiotic recombination factor component of recombination bridges involved in meiotic double-strand break repair. Modulates the localization of recombinases DMC1:RAD51 to meiotic double-strand break (DSB) sites through the interaction with BRCA2 and its recruitment during meiotic recombination. Indispensable for the DSB repair, homologous synapsis, and crossover formation that are needed for progression past metaphase I, is essential for spermatogenesis and male fertility. Required for proper recombinase recruitment in female meiosis. Inhibits BNC1 transcriptional activity during spermatogenesis, probably by sequestering it in the cytoplasm. May be involved in modulating HSF2 activation in testis. The chain is Heat shock factor 2-binding protein from Mus musculus (Mouse).